A 363-amino-acid polypeptide reads, in one-letter code: Glutamate--cysteine ligase (363 aa).

Belongs to the glutamate--cysteine ligase type 2 family. YbdK subfamily.

The enzyme catalyses L-cysteine + L-glutamate + ATP = gamma-L-glutamyl-L-cysteine + ADP + phosphate + H(+). Functionally, catalyzes the synthesis of gamma-glutamylcysteine (gamma-GC), the main low-molecular-weight thiol compound instead of glutathione in halophilic archaea. This chain is Glutamate--cysteine ligase, found in Haloquadratum walsbyi (strain DSM 16790 / HBSQ001).